We begin with the raw amino-acid sequence, 183 residues long: Capsid protein (183 aa).

Residues 136 to 183 (NAPILSTLPETTVVRRRGRSPRRRTPSPRRRRSQSPRRRRSQSRESQC) form a disordered region. Positions 149 to 176 (VRRRGRSPRRRTPSPRRRRSQSPRRRRS) are enriched in basic residues. A phosphoserine; by host mark is found at Ser-155, Ser-162, and Ser-170. One copy of the 1; half-length repeat lies at 155–161 (SPRRRTP). The segment at 155 to 177 (SPRRRTPSPRRRRSQSPRRRRSQ) is 3 X 8 AA repeats of S-P-R-R-R-[PR]-S-Q. The Bipartite nuclear localization signal signature appears at 158 to 175 (RRTPSPRRRRSQSPRRRR). 2 consecutive repeat copies span residues 162–169 (SPRRRRSQ) and 170–177 (SPRRRRSQ). The RNA binding stretch occupies residues 177-183 (QSRESQC).

The protein belongs to the orthohepadnavirus core antigen family. As to quaternary structure, homodimerizes, then multimerizes. Interacts with cytosol exposed regions of viral L glycoprotein present in the reticulum-to-Golgi compartment. Interacts with human FLNB. Phosphorylated form interacts with host importin alpha; this interaction depends on the exposure of the NLS, which itself depends upon genome maturation and/or phosphorylation of the capsid protein. Interacts with host NUP153. Phosphorylated by host SRPK1, SRPK2, and maybe protein kinase C or GAPDH. Phosphorylation is critical for pregenomic RNA packaging. Protein kinase C phosphorylation is stimulated by HBx protein and may play a role in transport of the viral genome to the nucleus at the late step during the viral replication cycle.

The protein localises to the virion. Its subcellular location is the host cytoplasm. In terms of biological role, self assembles to form an icosahedral capsid. Most capsids appear to be large particles with an icosahedral symmetry of T=4 and consist of 240 copies of capsid protein, though a fraction forms smaller T=3 particles consisting of 180 capsid proteins. Entering capsids are transported along microtubules to the nucleus. Phosphorylation of the capsid is thought to induce exposure of nuclear localization signal in the C-terminal portion of the capsid protein that allows binding to the nuclear pore complex via the importin (karyopherin-) alpha and beta. Capsids are imported in intact form through the nuclear pore into the nuclear basket, where it probably binds NUP153. Only capsids that contain the mature viral genome can release the viral DNA and capsid protein into the nucleoplasm. Immature capsids get stuck in the basket. Capsids encapsulate the pre-genomic RNA and the P protein. Pre-genomic RNA is reverse-transcribed into DNA while the capsid is still in the cytoplasm. The capsid can then either be directed to the nucleus, providing more genomes for transcription, or bud through the endoplasmic reticulum to provide new virions. In Homo sapiens (Human), this protein is Capsid protein.